The chain runs to 520 residues: 1,4-alpha-glucan branching enzyme TTHA1902 (520 aa).

Residue glutamate 184 is the Nucleophile of the active site. The substrate site is built by arginine 265 and glycine 282. Catalysis depends on aspartate 353, which acts as the Proton donor. Residues tryptophan 404, aspartate 460, and glutamine 469 each contribute to the substrate site.

Belongs to the glycosyl hydrolase 57 family.

The catalysed reaction is Transfers a segment of a (1-&gt;4)-alpha-D-glucan chain to a primary hydroxy group in a similar glucan chain.. It participates in glycan biosynthesis; glycogen biosynthesis. In terms of biological role, catalyzes the formation of branch points in alpha-glucans by cleavage of an alpha-1,4 glycosidic bond and subsequent transfer of the cleaved-off oligosaccharide to a new alpha-1,6 position. The branch chain-length distribution of the reaction products shows degree of polymerization (DP) of 3 to 13, with two local maxima at DP 7 and DP 11. Exhibits an alpha-retaining catalytic mechanism. Is involved in glycogen biosynthesis. Shows a secondary activity, i.e. the hydrolysis of the substrate, being 4% of the total activity. Can use amylose as substrate but not alpha-1,4-linked oligosaccharides of 2-7 glucose residues, beta-cyclodextrin, 6-O-glucosyl-beta-cyclodextrin and 6-O-maltosyl-beta-cyclodextrin. Is not able to branch amylopectin further, it only hydrolyzes amylopectin. Thus, displays preference for linear and long substrates (amylose) over branched structures (amylopectin). This Thermus thermophilus (strain ATCC 27634 / DSM 579 / HB8) protein is 1,4-alpha-glucan branching enzyme TTHA1902.